The following is a 661-amino-acid chain: uncharacterized protein (661 aa).

Helical transmembrane passes span 27–47 (LAIGLLGVCAVVAAFGLVSGA), 68–88 (VGFFAASLAGALCLGALIHVV), 116–136 (LWLGLAATMVVIQAAHDTGVG), 150–170 (VAASEMARGWIVAAICALVVA), 179–199 (WLGHVVLLVPTVLAVVATAVT), 214–234 (AAIVFAVAFATLTGLKIAAAL), 251–271 (GALALAYGAMLLYLFIPGWAV), 279–299 (GLLAGVILTSVWLFDCWRLLV), 313–333 (GAALAMMAAMASIAAMAVMTA), 369–389 (SLIGAAGVVLAIGYAAGFAAL), 396–416 (WPVGRLIAWLTGCAALVFTSG), 435–455 (MTLNMFIPVLLVLGGPVTLAL), 488–508 (PITAFVLFVASPYIVYFTPLF), 519–539 (EFMAIHFLVVGYLFYWAIIGI), 552–572 (IGLLFAVMPFHAFFGIALMTM), and 599–619 (GGGIAWSLTELPVIMVIVALV).

It to M.leprae ML1998.

The protein resides in the cell membrane. This is an uncharacterized protein from Mycobacterium tuberculosis (strain CDC 1551 / Oshkosh).